The sequence spans 407 residues: Dephospho-CoA kinase (407 aa).

The 202-residue stretch at 3–204 folds into the DPCK domain; the sequence is RIGLTGGIGA…QPFAHNLAQR (202 aa). Position 11–16 (11–16) interacts with ATP; sequence GAGKSL. A UPF0157 region spans residues 196–407; sequence PFAHNLAQRQ…EWADAVHWRP (212 aa).

In the N-terminal section; belongs to the CoaE family. It in the C-terminal section; belongs to the UPF0157 (GrpB) family.

The protein resides in the cytoplasm. The catalysed reaction is 3'-dephospho-CoA + ATP = ADP + CoA + H(+). The protein operates within cofactor biosynthesis; coenzyme A biosynthesis; CoA from (R)-pantothenate: step 5/5. In terms of biological role, catalyzes the phosphorylation of the 3'-hydroxyl group of dephosphocoenzyme A to form coenzyme A. The chain is Dephospho-CoA kinase from Mycobacterium bovis (strain ATCC BAA-935 / AF2122/97).